The primary structure comprises 453 residues: DNA repair protein RadA (453 aa).

Residues 10 to 27 form a C4-type zinc finger; sequence CQECGYQSPKYLGRCPNC. 95-102 serves as a coordination point for ATP; that stretch reads GDPGIGKS. The short motif at 251–255 is the RadA KNRFG motif element; it reads KNRFG. Residues 350–453 are lon-protease-like; the sequence is DAYLKSAGGV…VGQVLNAVFS (104 aa).

Belongs to the RecA family. RadA subfamily.

DNA-dependent ATPase involved in processing of recombination intermediates, plays a role in repairing DNA breaks. Stimulates the branch migration of RecA-mediated strand transfer reactions, allowing the 3' invading strand to extend heteroduplex DNA faster. Binds ssDNA in the presence of ADP but not other nucleotides, has ATPase activity that is stimulated by ssDNA and various branched DNA structures, but inhibited by SSB. Does not have RecA's homology-searching function. This chain is DNA repair protein RadA, found in Streptococcus pyogenes serotype M1.